Here is a 622-residue protein sequence, read N- to C-terminus: Cilia- and flagella-associated protein 206 (622 aa).

Residues 568–593 (NTSQVYPLKEASTQSKREGSSRVPRP) form a disordered region.

The protein belongs to the CFAP206 family. In terms of tissue distribution, expressed in the sperm, oviduct, lung, nasal cavity, brain ependyma and choroid plexus.

It localises to the cytoplasm. It is found in the cytoskeleton. Its subcellular location is the cilium axoneme. The protein resides in the cilium basal body. Its function is as follows. Essential for sperm motility and is involved in the regulation of the beating frequency of motile cilia on the epithelial cells of the respiratory tract. Required for the establishment of radial spokes in sperm flagella. In Mus musculus (Mouse), this protein is Cilia- and flagella-associated protein 206.